The chain runs to 154 residues: Endoribonuclease YbeY (154 aa).

Residues histidine 120, histidine 124, and histidine 130 each contribute to the Zn(2+) site.

This sequence belongs to the endoribonuclease YbeY family. The cofactor is Zn(2+).

Its subcellular location is the cytoplasm. In terms of biological role, single strand-specific metallo-endoribonuclease involved in late-stage 70S ribosome quality control and in maturation of the 3' terminus of the 16S rRNA. The protein is Endoribonuclease YbeY of Oceanobacillus iheyensis (strain DSM 14371 / CIP 107618 / JCM 11309 / KCTC 3954 / HTE831).